The sequence spans 538 residues: MVNKVVDEVQRLVSAIILTSFMTGLFILSLWKNYVTVHFQHKNDPRDTRSSRTKIQPNDKKKKRPARHSRPLSISSTTPLDLQRDQENNIEYDRTVTSKLSMTSNASLSENGDGNANIKMETNVNQAPYAAENPFQNIALAEDTKLVPDLKYYYKEYGIDIEEFEVETDDGFIIDLWHFKSRLNDGVEEVKREPILLLHGLLQSCGAFASSGRKSLAYFLYESGFDVWLGNNRCGLNAKWNMKKLGNDHSKKWDWDMHQMVQYDLKALINYVLDSTGYAKLSLVAHSQGTTQGFMGLVNGEKLYASDFKLVDKLENFVALAPAVYPGPLLDEKAFVRLMAKGIDSPWYFGRRSFIPLMMTMRKLMVGTKIFSFLSYIMFNYLFDWNDVLWDRVLRDRNFLFSPVHISVKLMQWWLSPLPNKLSFKKGAEKIFPDKKTWFPIAKNDDDSGNNLDNNKLHLNPKRQNSEEFPHIIMFIPKQDRLVDGERLINHFINHEANAVYKIWYIDEYSHLDVLWAHDVIDRIGKPMIENLRFPNAR.

The Cytoplasmic portion of the chain corresponds to 1–11; it reads MVNKVVDEVQR. The chain crosses the membrane as a helical; Signal-anchor for type II membrane protein span at residues 12-32; it reads LVSAIILTSFMTGLFILSLWK. Over 33–538 the chain is Lumenal; that stretch reads NYVTVHFQHK…IENLRFPNAR (506 aa). Residues 42-87 form a disordered region; it reads KNDPRDTRSSRTKIQPNDKKKKRPARHSRPLSISSTTPLDLQRDQE. The span at 60–70 shows a compositional bias: basic residues; that stretch reads KKKKRPARHSR. S73 and S107 each carry phosphoserine. The Nucleophile role is filled by S287. Active-site charge relay system residues include D480 and H511.

It belongs to the AB hydrolase superfamily. In terms of processing, not glycosylated.

The protein localises to the cell membrane. The enzyme catalyses a sterol ester + H2O = a sterol + a fatty acid + H(+). Its function is as follows. Mediates the hydrolysis of steryl esters. Required for mobilization of steryl ester, thereby playing a central role in lipid metabolism. In Saccharomyces cerevisiae (strain ATCC 204508 / S288c) (Baker's yeast), this protein is Sterol esterase 2 (YEH2).